Reading from the N-terminus, the 75-residue chain is MATKTSNLGHLLLSLFILLLFILSQVGVAQAKRLQQRNKLRLDCVPLPPPPPPLRGIVKPPIASFHSASPKDKGP.

A signal peptide spans 1–31 (MATKTSNLGHLLLSLFILLLFILSQVGVAQA). Residues 51–75 (PPPLRGIVKPPIASFHSASPKDKGP) are disordered. An SCOOP motif motif is present at residues 61–75 (PIASFHSASPKDKGP). The short motif at 67-69 (SAS) is the SxS motif essential for MIK2 binding element.

This sequence belongs to the serine rich endogenous peptide (SCOOP) phytocytokine family. In terms of assembly, interacts with MIK2 (via extracellular leucine-rich repeat domain); this interaction triggers the formation of complex between MIK2 and the BAK1/SERK3 and SERK4 coreceptors, and subsequent BAK1 activation by phosphorylation. In terms of tissue distribution, mostly expressed in leaves and seedlings shoots, and, to a lower extent, in roots, stems, siliques, seeds and flowers.

Its subcellular location is the cell membrane. It is found in the secreted. The protein resides in the extracellular space. The protein localises to the apoplast. Brassicaceae-specific phytocytokine (plant endogenous peptide released into the apoplast) perceived by MIK2 in a BAK1/SERK3 and SERK4 coreceptors-dependent manner, that modulates various physiological and antimicrobial processes including growth prevention and reactive oxygen species (ROS) response regulation. Inhibits root growth. Prevents general growth and development. Exhibits antibacterial effects against Pseudomonas syringae pv. tomato DC3000, Ralstonia solanacearum, Bacillus subtilis and Agrobacterium tumefaciens, thus being an antimicrobial peptide (AMP). The protein is Serine rich endogenous peptide 4 of Arabidopsis thaliana (Mouse-ear cress).